The chain runs to 457 residues: ATP synthase subunit beta (457 aa).

Residue 147–154 coordinates ATP; sequence GGAGVGKT.

Belongs to the ATPase alpha/beta chains family. As to quaternary structure, F-type ATPases have 2 components, CF(1) - the catalytic core - and CF(0) - the membrane proton channel. CF(1) has five subunits: alpha(3), beta(3), gamma(1), delta(1), epsilon(1). CF(0) has three main subunits: a(1), b(2) and c(9-12). The alpha and beta chains form an alternating ring which encloses part of the gamma chain. CF(1) is attached to CF(0) by a central stalk formed by the gamma and epsilon chains, while a peripheral stalk is formed by the delta and b chains.

The protein resides in the cell inner membrane. It carries out the reaction ATP + H2O + 4 H(+)(in) = ADP + phosphate + 5 H(+)(out). Its function is as follows. Produces ATP from ADP in the presence of a proton gradient across the membrane. The catalytic sites are hosted primarily by the beta subunits. The sequence is that of ATP synthase subunit beta from Haemophilus ducreyi (strain 35000HP / ATCC 700724).